The chain runs to 392 residues: Caveolae-associated protein 1 (392 aa).

An N-acetylmethionine modification is found at Met1. Basic and acidic residues predominate over residues 1 to 10; it reads MEDVTLHIVE. The interval 1 to 45 is disordered; that stretch reads MEDVTLHIVERPYSGYPDASSEGPEPTPGEARATEEPSGTGSDEL. Residues 1 to 100 are required for homotrimerization and for interaction with CAVIN2 and CAVIN3; sequence MEDVTLHIVE…IQGELSKLGK (100 aa). Phosphoserine is present on residues Ser21 and Ser38. Residue Thr40 is modified to Phosphothreonine. Residues Ser42 and Ser48 each carry the phosphoserine modification. The interval 54-64 is nuclear export signal; that stretch reads VLVLSLLDKII. The tract at residues 55–77 is leucine-zipper 1; the sequence is LVLSLLDKIIGAVDQIQLTQAQL. A Glycyl lysine isopeptide (Lys-Gly) (interchain with G-Cter in SUMO2) cross-link involves residue Lys118. Residue Ser120 is modified to Phosphoserine. Residue Lys124 forms a Glycyl lysine isopeptide (Lys-Gly) (interchain with G-Cter in SUMO2) linkage. The tract at residues 138–154 is nuclear localization signal; sequence KKLEVNEAELLRRRNFK. Position 158 is a phosphotyrosine (Tyr158). Lys163 is covalently cross-linked (Glycyl lysine isopeptide (Lys-Gly) (interchain with G-Cter in SUMO1); alternate). Residue Lys163 forms a Glycyl lysine isopeptide (Lys-Gly) (interchain with G-Cter in SUMO2); alternate linkage. Lys167 participates in a covalent cross-link: Glycyl lysine isopeptide (Lys-Gly) (interchain with G-Cter in SUMO2). The tract at residues 168–188 is leucine-zipper 2; sequence LSVSKSLKESEALPEKEGDEL. 2 positions are modified to phosphoserine: Ser169 and Ser171. A Glycyl lysine isopeptide (Lys-Gly) (interchain with G-Cter in SUMO2) cross-link involves residue Lys172. Phosphoserine occurs at positions 173 and 177. Positions 173-183 are enriched in basic and acidic residues; the sequence is SLKESEALPEK. The interval 173 to 198 is disordered; that stretch reads SLKESEALPEKEGDELGEGERPEEDA. Residues 184–198 show a composition bias toward acidic residues; the sequence is EGDELGEGERPEEDA. A coiled-coil region spans residues 201 to 284; it reads IELSSDEAVE…RMNKLGTRLV (84 aa). A phosphoserine mark is found at Ser204 and Ser205. The segment at 235-251 is nuclear localization signal; sequence KKAFSKEKMEKTKVRTR. The segment at 259 to 299 is leucine-zipper 3; it reads LKTKENLEKTRHTLEKRMNKLGTRLVPVERREKLKTSRDKL. Ser302 carries the post-translational modification Phosphoserine. Residue Thr304 is modified to Phosphothreonine. Tyr310 bears the Phosphotyrosine mark. Lys328 is covalently cross-linked (Glycyl lysine isopeptide (Lys-Gly) (interchain with G-Cter in SUMO2)). The tract at residues 347-367 is disordered; sequence GPDDDEVGAERGAETDLLRGS. Residues 354–363 show a composition bias toward basic and acidic residues; it reads GAERGAETDL. Residues Ser367, Ser368, Ser381, Ser389, and Ser391 each carry the phosphoserine modification.

This sequence belongs to the CAVIN family. Component of the CAVIN complex composed of CAVIN1, CAVIN2, CAVIN3 and CAVIN4. Interacts with RNA polymerase I subunit POLR1A/RPA1 and TTF1. Binds the 3' end of pre-rRNA. Interacts with transcription factor ZNF148. Interacts with LIPE in the adipocyte cytoplasm. Interacts with CAV1, CAV3, CAVIN2, CAVIN3 and CAVIN4. Phosphorylated. Present in active and inactive forms. Changes in phosphorylation pattern may alter activity. Phosphorylation at Tyr-158 is essential for its function in the regulation of ribosomal transcriptional activity. In terms of processing, monoubiquitinated. As to expression, expressed in the adipocyte (at protein level). Expressed in all striated and smooth muscles tested including diaphragm, esophageal striated muscle, fibroblast, endocardial endothelium, epicardial mesothelium, intestinal smooth muscle, masseter, soleus muscle, vascular smooth muscle and white gastrocnemius muscle (at protein level). Expressed in the endothelium and perineural sheath (at protein level). Not expressed in hepatocytes.

The protein localises to the membrane. It localises to the caveola. The protein resides in the cell membrane. It is found in the microsome. Its subcellular location is the endoplasmic reticulum. The protein localises to the cytoplasm. It localises to the cytosol. The protein resides in the mitochondrion. It is found in the nucleus. Its function is as follows. Plays an important role in caveolae formation and organization. Essential for the formation of caveolae in all tissues. Core component of the CAVIN complex which is essential for recruitment of the complex to the caveolae in presence of calveolin-1 (CAV1). Essential for normal oligomerization of CAV1. Promotes ribosomal transcriptional activity in response to metabolic challenges in the adipocytes and plays an important role in the formation of the ribosomal transcriptional loop. Dissociates transcription complexes paused by DNA-bound TTF1, thereby releasing both RNA polymerase I and pre-RNA from the template. The caveolae biogenesis pathway is required for the secretion of proteins such as GASK1A. The sequence is that of Caveolae-associated protein 1 from Rattus norvegicus (Rat).